The sequence spans 314 residues: Small ribosomal subunit protein uS2c (314 aa).

It belongs to the universal ribosomal protein uS2 family.

It localises to the plastid. It is found in the chloroplast. This Stigeoclonium helveticum (Green alga) protein is Small ribosomal subunit protein uS2c (rps2).